Reading from the N-terminus, the 282-residue chain is Undecaprenyl-diphosphatase (282 aa).

7 consecutive transmembrane segments (helical) span residues 6–26 (LYFVKAFFLGIIEGLTEFIPV), 45–65 (SGKVFEVVIQLGAILAVMWIF), 85–105 (LFTRNLLLAFFPAAIIGAIFI), 112–132 (FYHPGVVAVTLVLGGLIMLWV), 200–220 (ATEFSFFLAMPTMLGAAVYDM), 230–250 (HDLGAIAVGFVAAFLSALLVV), and 262–282 (YRGFAWYRIALGVVVAAWLAF).

This sequence belongs to the UppP family.

The protein resides in the cell inner membrane. The catalysed reaction is di-trans,octa-cis-undecaprenyl diphosphate + H2O = di-trans,octa-cis-undecaprenyl phosphate + phosphate + H(+). Catalyzes the dephosphorylation of undecaprenyl diphosphate (UPP). Confers resistance to bacitracin. In Bordetella avium (strain 197N), this protein is Undecaprenyl-diphosphatase.